The chain runs to 215 residues: 3-isopropylmalate dehydratase small subunit (215 aa).

This sequence belongs to the LeuD family. LeuD type 1 subfamily. As to quaternary structure, heterodimer of LeuC and LeuD.

The enzyme catalyses (2R,3S)-3-isopropylmalate = (2S)-2-isopropylmalate. It participates in amino-acid biosynthesis; L-leucine biosynthesis; L-leucine from 3-methyl-2-oxobutanoate: step 2/4. Functionally, catalyzes the isomerization between 2-isopropylmalate and 3-isopropylmalate, via the formation of 2-isopropylmaleate. This Xanthomonas oryzae pv. oryzae (strain MAFF 311018) protein is 3-isopropylmalate dehydratase small subunit.